A 430-amino-acid chain; its full sequence is Maintenance of mitochondrial morphology protein 1 (430 aa).

The Lumenal portion of the chain corresponds to 1–82 (MTEIDPNINE…ISNTWNFTQG (82 aa)). Residues 83 to 103 (LVVGQLSVIFLIIIFVKFFVF) traverse the membrane as a helical segment. Residues 104 to 430 (ADSSSSIPSK…AKPKDSDDTL (327 aa)) lie on the Cytoplasmic side of the membrane. 2 stretches are compositionally biased toward basic and acidic residues: residues 126 to 138 (RDNK…DRHN) and 335 to 346 (ENGKGSSSEDKK). Disordered stretches follow at residues 126-154 (RDNK…TDDE) and 315-346 (QADQ…EDKK). In terms of domain architecture, SMP-LTD spans 178 to 408 (ASESLDWFNV…EPRFQVVKLP (231 aa)).

Belongs to the MMM1 family. Homodimer. Component of the ER-mitochondria encounter structure (ERMES) or MDM complex, composed of MMM1, MDM10, MDM12 and MDM34. An MMM1 homodimer associates with one molecule of MDM12 on each side in a pairwise head-to-tail manner, and the SMP-LTD domains of MMM1 and MDM12 generate a continuous hydrophobic tunnel for phospholipid trafficking.

It is found in the endoplasmic reticulum membrane. Functionally, component of the ERMES/MDM complex, which serves as a molecular tether to connect the endoplasmic reticulum (ER) and mitochondria. Components of this complex are involved in the control of mitochondrial shape and protein biogenesis, and function in nonvesicular lipid trafficking between the ER and mitochondria. The MDM12-MMM1 subcomplex functions in the major beta-barrel assembly pathway that is responsible for biogenesis of all outer membrane beta-barrel proteins, and acts in a late step after the SAM complex. The MDM10-MDM12-MMM1 subcomplex further acts in the TOM40-specific pathway after the action of the MDM12-MMM1 complex. Essential for establishing and maintaining the structure of mitochondria and maintenance of mtDNA nucleoids. This is Maintenance of mitochondrial morphology protein 1 from Lodderomyces elongisporus (strain ATCC 11503 / CBS 2605 / JCM 1781 / NBRC 1676 / NRRL YB-4239) (Yeast).